The following is a 363-amino-acid chain: Molybdenum import ATP-binding protein ModC (363 aa).

Residues 1–232 form the ABC transporter domain; the sequence is MLDLDLRRRQ…PGLRPLTGRY (232 aa). 30-37 contacts ATP; that stretch reads GRSGSGKT. A Mop domain is found at 292–358; sequence RVSIRNVLPA…IKALTIARGD (67 aa).

It belongs to the ABC transporter superfamily. Molybdate importer (TC 3.A.1.8) family. The complex is composed of two ATP-binding proteins (ModC), two transmembrane proteins (ModB) and a solute-binding protein (ModA).

The protein localises to the cell inner membrane. It carries out the reaction molybdate(out) + ATP + H2O = molybdate(in) + ADP + phosphate + H(+). Functionally, part of the ABC transporter complex ModABC involved in molybdenum import. Responsible for energy coupling to the transport system. This Paramagnetospirillum magneticum (strain ATCC 700264 / AMB-1) (Magnetospirillum magneticum) protein is Molybdenum import ATP-binding protein ModC.